Consider the following 550-residue polypeptide: Chaperonin GroEL (550 aa).

ATP contacts are provided by residues 30–33 (TLGP), Lys-51, 87–91 (DGTTT), Gly-415, and Asp-496.

The protein belongs to the chaperonin (HSP60) family. Forms a cylinder of 14 subunits composed of two heptameric rings stacked back-to-back. Interacts with the co-chaperonin GroES.

It localises to the cytoplasm. The enzyme catalyses ATP + H2O + a folded polypeptide = ADP + phosphate + an unfolded polypeptide.. Functionally, together with its co-chaperonin GroES, plays an essential role in assisting protein folding. The GroEL-GroES system forms a nano-cage that allows encapsulation of the non-native substrate proteins and provides a physical environment optimized to promote and accelerate protein folding. The sequence is that of Chaperonin GroEL from Rickettsia prowazekii (strain Madrid E).